Reading from the N-terminus, the 505-residue chain is Peroxisome proliferator-activated receptor gamma (505 aa).

A glycan (O-linked (GlcNAc) threonine) is linked at Thr-84. Residue Ser-112 is modified to Phosphoserine. The segment at residues 136–210 (AIECRVCGDK…VGMSHNAIRF (75 aa)) is a DNA-binding region (nuclear receptor). NR C4-type zinc fingers lie at residues 139 to 159 (CRVCGDKASGFHYGVHACEGC) and 176 to 198 (CDLNCRIHKKSRNKCQYCRFQKC). The interaction with FAM120B stretch occupies residues 205-280 (HNAIRFGRMP…DKSPFVIYDM (76 aa)). The region spanning 238–503 (DLRALAKHLY…HPLLQEIYKD (266 aa)) is the NR LBD domain. Lys-252 participates in a covalent cross-link: Glycyl lysine isopeptide (Lys-Gly) (interchain with G-Cter in ubiquitin). Rosiglitazone contacts are provided by residues 314–317 (QFRS), His-351, His-477, and Tyr-501. Residues 495 to 503 (PLLQEIYKD) carry the 9aaTAD motif.

Belongs to the nuclear hormone receptor family. NR1 subfamily. In terms of assembly, interacts with FOXO1 (acetylated form). Heterodimer with other nuclear receptors, such as RXRA. The heterodimer with the retinoic acid receptor RXRA is called adipocyte-specific transcription factor ARF6. Interacts with NCOA6 coactivator, leading to a strong increase in transcription of target genes. Interacts with coactivator PPARBP, leading to a mild increase in transcription of target genes. Interacts with NOCA7 in a ligand-inducible manner. Interacts with NCOA1 and NCOA2 LXXLL motifs. Interacts with ASXL1, ASXL2, DNTTIP2, FAM120B, MAP2K1/MEK1, NR0B2, PDPK1, PRDM16, PRMT2 and TGFB1I1. Interacts (when activated by agonist) with PPP5C. Interacts with HELZ2 and THRAP3; the interaction stimulates the transcriptional activity of PPARG. Interacts with PER2, the interaction is ligand dependent and blocks PPARG recruitment to target promoters. Interacts with NOCT. Interacts with ACTN4. Interacts (when in the liganded conformation) with GPS2. Interacts with CRY1 and CRY2 in a ligand-dependent manner. In the absence of hormonal ligand, interacts with TACC1. In macrophages, interacts with PAQR3 and STUB1; the interactions promote PPARG poylubiquitination and STUB1-mediated degradation. O-GlcNAcylation at Thr-84 reduces transcriptional activity in adipocytes. Post-translationally, phosphorylated in basal conditions and dephosphorylated when treated with the ligand. May be dephosphorylated by PPP5C. The phosphorylated form may be inactive and dephosphorylation at Ser-112 induces adipogenic activity. In terms of processing, ubiquitinated by E3 ubiquitin-protein ligase complex containing FBXO9; leading to proteasomal degradation. Ubiquitinated at Lys-252 by TRIM55 leading to proteasomal degradation. Ubiquitinated by E3 ubiquitin-protein ligase STUB1/CHIP; leading to proteasomal degradation. As to expression, highest expression in adipose tissue. Lower in skeletal muscle, spleen, heart and liver. Also detectable in placenta, lung and ovary.

It is found in the nucleus. It localises to the cytoplasm. PDPK1 activates its transcriptional activity independently of its kinase activity. Nuclear receptor that binds peroxisome proliferators such as hypolipidemic drugs and fatty acids. Once activated by a ligand, the nuclear receptor binds to DNA specific PPAR response elements (PPRE) and modulates the transcription of its target genes, such as acyl-CoA oxidase. It therefore controls the peroxisomal beta-oxidation pathway of fatty acids. Key regulator of adipocyte differentiation and glucose homeostasis. ARF6 acts as a key regulator of the tissue-specific adipocyte P2 (aP2) enhancer. Acts as a critical regulator of gut homeostasis by suppressing NF-kappa-B-mediated pro-inflammatory responses. Plays a role in the regulation of cardiovascular circadian rhythms by regulating the transcription of BMAL1 in the blood vessels. In terms of biological role, (Microbial infection) Upon treatment with M.tuberculosis or its lipoprotein LpqH, phosphorylation of MAPK p38 and IL-6 production are modulated, probably via this protein. This chain is Peroxisome proliferator-activated receptor gamma (PPARG), found in Homo sapiens (Human).